The sequence spans 100 residues: Dromyosuppressin (100 aa).

The signal sequence occupies residues 1-24; it reads MSFAQFFVACCLAIVLLAVSNTRA. Positions 25–84 are excised as a propeptide; it reads AVQGPPLCQSGIVEEMPPHIRKVCQALENSDQLTSALKSYINNEASALVANSDDLLKNYN. At F96 the chain carries Phenylalanine amide.

It belongs to the myosuppressin family.

The protein resides in the secreted. Myoinhibiting neuropeptide. The protein is Dromyosuppressin of Drosophila melanogaster (Fruit fly).